The chain runs to 135 residues: MRVPIITTLLTLALTGLSQAASLGVETTHGVECNRKTTKGDTVKMHYRGTLAEDGSQFDASYDRGTPFKFKLGAGRVIKGWDEGLLDMCVGEKRTLTIPPEYGYGDRGIGPIPGGATLIFQTELLEIEGVPKDEL.

Residues 1 to 20 form the signal peptide; it reads MRVPIITTLLTLALTGLSQA. The region spanning 40–128 is the PPIase FKBP-type domain; that stretch reads GDTVKMHYRG…IFQTELLEIE (89 aa). Residues 132–135 carry the Prevents secretion from ER motif; the sequence is KDEL.

The protein belongs to the FKBP-type PPIase family. FKBP2 subfamily.

Its subcellular location is the endoplasmic reticulum. The catalysed reaction is [protein]-peptidylproline (omega=180) = [protein]-peptidylproline (omega=0). With respect to regulation, inhibited by both FK506 and rapamycin. Functionally, PPIases accelerate the folding of proteins. It catalyzes the cis-trans isomerization of proline imidic peptide bonds in oligopeptides. The polypeptide is FK506-binding protein 2 (fkbB) (Emericella nidulans (strain FGSC A4 / ATCC 38163 / CBS 112.46 / NRRL 194 / M139) (Aspergillus nidulans)).